Reading from the N-terminus, the 322-residue chain is Sideroflexin-1 (322 aa).

N-acetylserine is present on serine 2. Topologically, residues 2–102 (SGELPPNINI…MSAQVPMNMT (101 aa)) are mitochondrial matrix. A helical membrane pass occupies residues 103-120 (ITGCMMTFYRTTPAVLFW). Topologically, residues 121 to 146 (QWINQSFNAVVNYTNRSGDAPLTVNE) are mitochondrial intermembrane. The helical transmembrane segment at 147–167 (LGTAYVSATTGAVATALGLNA) threads the bilayer. Residues 168-174 (LTKHVSP) lie on the Mitochondrial matrix side of the membrane. Residues 175–195 (LIGRFVPFAAVAAANCINIPL) traverse the membrane as a helical segment. The Mitochondrial intermembrane portion of the chain corresponds to 196–228 (MRQRELKVGIPVTDENGNRLGESANAAKQAITQ). Residues 229 to 249 (VVVSRILMAAPGMAIPPFIMN) traverse the membrane as a helical segment. The Mitochondrial matrix segment spans residues 250–266 (TLEKKAFLKRFPWMSAP). A helical membrane pass occupies residues 267–287 (VQVGIVGFCLVFATPLCCALF). Topologically, residues 288-322 (PQKSSMSVTSLEAELQARIRETYPELRRVYFNKGL) are mitochondrial intermembrane.

It belongs to the sideroflexin family.

The protein resides in the mitochondrion inner membrane. The enzyme catalyses L-serine(in) = L-serine(out). It catalyses the reaction L-alanine(in) = L-alanine(out). The catalysed reaction is L-cysteine(in) = L-cysteine(out). Its function is as follows. Amino acid transporter importing serine, an essential substrate of the mitochondrial branch of the one-carbon pathway, into mitochondria. Mitochondrial serine is then converted to glycine and formate, which exits to the cytosol where it is used to generate the charged folates that serve as one-carbon donors. May also transport other amino acids including alanine and cysteine. The protein is Sideroflexin-1 (SFXN1) of Bos taurus (Bovine).